The sequence spans 353 residues: UPF0283 membrane protein YcjF (353 aa).

Positions 1 to 19 (MSEPLKPRIDFAEPLKEEP) are enriched in basic and acidic residues. The disordered stretch occupies residues 1–35 (MSEPLKPRIDFAEPLKEEPTSAFKAQQTFSEAESR). 3 helical membrane passes run 70–90 (MVMG…VQWT), 100–120 (VALG…GSVV), and 213–233 (ESTL…FIAW).

This sequence belongs to the UPF0283 family.

It localises to the cell inner membrane. This chain is UPF0283 membrane protein YcjF, found in Salmonella paratyphi B (strain ATCC BAA-1250 / SPB7).